A 205-amino-acid polypeptide reads, in one-letter code: MRLGRDFYNRDTVTVAKELLGKVLVRNINGVTLKGKIVETEAYIGAIDKASHAYGGKRTNRTETLYADPGTVYVYIIYGMYHCLNLISEEKDVAGGVLIRGIEPLEGIEEMSKLRYKKSYEELSNYEKKNFSNGPSKLCMALGIDKGENGINTISSEEIYVEDDSLIKKDFSIVEAKRIGIDYAEEARDFLWRFYIKDNKFVSKK.

This sequence belongs to the DNA glycosylase MPG family.

This chain is Putative 3-methyladenine DNA glycosylase, found in Clostridium perfringens (strain 13 / Type A).